The chain runs to 148 residues: Ribosome maturation factor RimP (148 aa).

It belongs to the RimP family.

Its subcellular location is the cytoplasm. Its function is as follows. Required for maturation of 30S ribosomal subunits. The chain is Ribosome maturation factor RimP from Nautilia profundicola (strain ATCC BAA-1463 / DSM 18972 / AmH).